The chain runs to 462 residues: Argininosuccinate lyase (462 aa).

Belongs to the lyase 1 family. Argininosuccinate lyase subfamily.

Its subcellular location is the cytoplasm. It catalyses the reaction 2-(N(omega)-L-arginino)succinate = fumarate + L-arginine. Its pathway is amino-acid biosynthesis; L-arginine biosynthesis; L-arginine from L-ornithine and carbamoyl phosphate: step 3/3. This Bacillus cereus (strain ZK / E33L) protein is Argininosuccinate lyase.